Here is a 602-residue protein sequence, read N- to C-terminus: Elongation factor 4 (602 aa).

One can recognise a tr-type G domain in the interval 7–189 (SRIRNFCIIA…AVVDRVPAPA (183 aa)). Residues 19–24 (DHGKST) and 136–139 (NKID) contribute to the GTP site.

The protein belongs to the TRAFAC class translation factor GTPase superfamily. Classic translation factor GTPase family. LepA subfamily.

It is found in the cell inner membrane. It catalyses the reaction GTP + H2O = GDP + phosphate + H(+). Its function is as follows. Required for accurate and efficient protein synthesis under certain stress conditions. May act as a fidelity factor of the translation reaction, by catalyzing a one-codon backward translocation of tRNAs on improperly translocated ribosomes. Back-translocation proceeds from a post-translocation (POST) complex to a pre-translocation (PRE) complex, thus giving elongation factor G a second chance to translocate the tRNAs correctly. Binds to ribosomes in a GTP-dependent manner. The sequence is that of Elongation factor 4 from Synechococcus sp. (strain CC9902).